The sequence spans 200 residues: NADH-quinone oxidoreductase subunit C (200 aa).

Belongs to the complex I 30 kDa subunit family. In terms of assembly, NDH-1 is composed of 14 different subunits. Subunits NuoB, C, D, E, F, and G constitute the peripheral sector of the complex.

It is found in the cell inner membrane. The enzyme catalyses a quinone + NADH + 5 H(+)(in) = a quinol + NAD(+) + 4 H(+)(out). Its function is as follows. NDH-1 shuttles electrons from NADH, via FMN and iron-sulfur (Fe-S) centers, to quinones in the respiratory chain. The immediate electron acceptor for the enzyme in this species is believed to be ubiquinone. Couples the redox reaction to proton translocation (for every two electrons transferred, four hydrogen ions are translocated across the cytoplasmic membrane), and thus conserves the redox energy in a proton gradient. In Cereibacter sphaeroides (strain ATCC 17029 / ATH 2.4.9) (Rhodobacter sphaeroides), this protein is NADH-quinone oxidoreductase subunit C.